The primary structure comprises 130 residues: Flagellar assembly factor FliW (130 aa).

Belongs to the FliW family. Interacts with translational regulator CsrA and flagellin(s).

Its subcellular location is the cytoplasm. Its function is as follows. Acts as an anti-CsrA protein, binds CsrA and prevents it from repressing translation of its target genes, one of which is flagellin. Binds to flagellin and participates in the assembly of the flagellum. The sequence is that of Flagellar assembly factor FliW from Borreliella burgdorferi (strain ATCC 35210 / DSM 4680 / CIP 102532 / B31) (Borrelia burgdorferi).